The following is a 295-amino-acid chain: Ribosomal RNA small subunit methyltransferase A (295 aa).

Positions 31, 33, 58, 79, 104, and 129 each coordinate S-adenosyl-L-methionine.

It belongs to the class I-like SAM-binding methyltransferase superfamily. rRNA adenine N(6)-methyltransferase family. RsmA subfamily.

It localises to the cytoplasm. It catalyses the reaction adenosine(1518)/adenosine(1519) in 16S rRNA + 4 S-adenosyl-L-methionine = N(6)-dimethyladenosine(1518)/N(6)-dimethyladenosine(1519) in 16S rRNA + 4 S-adenosyl-L-homocysteine + 4 H(+). In terms of biological role, specifically dimethylates two adjacent adenosines (A1518 and A1519) in the loop of a conserved hairpin near the 3'-end of 16S rRNA in the 30S particle. May play a critical role in biogenesis of 30S subunits. The chain is Ribosomal RNA small subunit methyltransferase A from Leuconostoc mesenteroides subsp. mesenteroides (strain ATCC 8293 / DSM 20343 / BCRC 11652 / CCM 1803 / JCM 6124 / NCDO 523 / NBRC 100496 / NCIMB 8023 / NCTC 12954 / NRRL B-1118 / 37Y).